The following is a 292-amino-acid chain: Cytidine deaminase (292 aa).

2 CMP/dCMP-type deaminase domains span residues 47–167 (TPLK…FGPK) and 186–292 (DHQD…YYSL). 88–90 (NQE) lines the substrate pocket. Residue His-101 participates in Zn(2+) binding. The active-site Proton donor is the Glu-103. The Zn(2+) site is built by Cys-128 and Cys-131.

This sequence belongs to the cytidine and deoxycytidylate deaminase family. As to quaternary structure, homodimer. Zn(2+) is required as a cofactor.

It carries out the reaction cytidine + H2O + H(+) = uridine + NH4(+). The enzyme catalyses 2'-deoxycytidine + H2O + H(+) = 2'-deoxyuridine + NH4(+). This enzyme scavenges exogenous and endogenous cytidine and 2'-deoxycytidine for UMP synthesis. In Haemophilus influenzae (strain PittEE), this protein is Cytidine deaminase.